Consider the following 488-residue polypeptide: Glutamyl-tRNA(Gln) amidotransferase subunit A (488 aa).

Catalysis depends on charge relay system residues Lys77 and Ser152. Ser176 acts as the Acyl-ester intermediate in catalysis.

This sequence belongs to the amidase family. GatA subfamily. Heterotrimer of A, B and C subunits.

The enzyme catalyses L-glutamyl-tRNA(Gln) + L-glutamine + ATP + H2O = L-glutaminyl-tRNA(Gln) + L-glutamate + ADP + phosphate + H(+). In terms of biological role, allows the formation of correctly charged Gln-tRNA(Gln) through the transamidation of misacylated Glu-tRNA(Gln) in organisms which lack glutaminyl-tRNA synthetase. The reaction takes place in the presence of glutamine and ATP through an activated gamma-phospho-Glu-tRNA(Gln). The protein is Glutamyl-tRNA(Gln) amidotransferase subunit A of Streptococcus pyogenes serotype M12 (strain MGAS2096).